We begin with the raw amino-acid sequence, 346 residues long: L-malyl-CoA/beta-methylmalyl-CoA lyase (346 aa).

Residues glutamate 148 and aspartate 177 each coordinate Mg(2+). Substrate-binding positions include 176–177 (VD) and 253–254 (LH).

This sequence belongs to the HpcH/HpaI aldolase family. It depends on Mg(2+) as a cofactor. Mn(2+) is required as a cofactor.

The catalysed reaction is (S)-malyl-CoA = glyoxylate + acetyl-CoA. It catalyses the reaction (2R,3S)-beta-methylmalyl-CoA = propanoyl-CoA + glyoxylate. In terms of biological role, involved in the methylaspartate cycle. Catalyzes the reversible cleavage of beta-methylmalyl-CoA to propionyl-CoA and glyoxylate, as well as the reversible cleavage of (S)-malyl-CoA to acetyl-CoA and glyoxylate. In addition, it has a small malyl-CoA thioesterase activity. It can also catalyze the cleavage of (S)-citramalyl-CoA to acetyl-CoA and pyruvate. This Haloarcula marismortui (strain ATCC 43049 / DSM 3752 / JCM 8966 / VKM B-1809) (Halobacterium marismortui) protein is L-malyl-CoA/beta-methylmalyl-CoA lyase (citE1).